The sequence spans 958 residues: Translation initiation factor IF-2 (958 aa).

Disordered stretches follow at residues 67-95 (APAASRPAAPAPGPAAPKAPAPAPAAPAP) and 111-355 (PAPA…VPRG). Positions 75 to 95 (APAPGPAAPKAPAPAPAAPAP) are enriched in pro residues. The span at 140–161 (PAPARQGGQAPRPGGPRPGNNP) shows a compositional bias: low complexity. The segment covering 195 to 206 (RGERRNDGERPG) has biased composition (basic and acidic residues). Over residues 209-221 (RPAAGAGGPRPAA) the composition is skewed to low complexity. Positions 228–241 (PGAPRPGAPRPGAP) are enriched in pro residues. The segment covering 268–325 (GGAGRPGGAGRPGGGPGRPGGAPGAGTGGGAPAGGGFGKGGRGRGGTQGAFGKGGAGR) has biased composition (gly residues). Positions 326–335 (GKQRKSKRAK) are enriched in basic residues. The tr-type G domain occupies 450-621 (ARAPVVTVMG…AVLLTADAAL (172 aa)). The G1 stretch occupies residues 459–466 (GHVDHGKT). 459–466 (GHVDHGKT) serves as a coordination point for GTP. Residues 484–488 (GITQH) form a G2 region. The segment at 509–512 (DTPG) is G3. Residues 509-513 (DTPGH) and 563-566 (NKID) contribute to the GTP site. The tract at residues 563-566 (NKID) is G4. Residues 599–601 (SAR) form a G5 region.

This sequence belongs to the TRAFAC class translation factor GTPase superfamily. Classic translation factor GTPase family. IF-2 subfamily.

It is found in the cytoplasm. In terms of biological role, one of the essential components for the initiation of protein synthesis. Protects formylmethionyl-tRNA from spontaneous hydrolysis and promotes its binding to the 30S ribosomal subunits. Also involved in the hydrolysis of GTP during the formation of the 70S ribosomal complex. This is Translation initiation factor IF-2 from Paenarthrobacter aurescens (strain TC1).